The following is a 607-amino-acid chain: ATP-dependent RNA helicase-like protein DB10 (607 aa).

Polar residues predominate over residues 1–10 (MAVVTASSAG). Disordered regions lie at residues 1–25 (MAVVTASSAGPSYAPEDPTLPKPWK) and 66–108 (VFVS…DGTS). Positions 18-52 (PTLPKPWKGLVDGTTGFIYFWNPETNDTQYERPVP) constitute a WW domain. Over residues 89-98 (RGSNNKIARS) the composition is skewed to polar residues. Residues 99–108 (SSDRFHDGTS) are compositionally biased toward basic and acidic residues. The Q motif signature appears at 145-173 (TSFEATGFPSEIVREMHQAGFSAPTPIQA). The Helicase ATP-binding domain maps to 176–350 (WPIALQGRDI…ADLLVNSVQV (175 aa)). 189–196 (AKTGSGKT) is an ATP binding site. The short motif at 298-301 (DEAD) is the DEAD box element. Residues 379–523 (RVEQILRSKE…CVPTELRDMA (145 aa)) form the Helicase C-terminal domain. Residues 519–607 (LRDMASRGGG…WSGKKSRFTD (89 aa)) form a disordered region. The segment covering 538–548 (SGPGGRGGRGG) has biased composition (gly residues). A compositionally biased stretch (basic and acidic residues) spans 562 to 574 (GYDRGSRDSDRYG).

It belongs to the DEAD box helicase family.

It carries out the reaction ATP + H2O = ADP + phosphate + H(+). This chain is ATP-dependent RNA helicase-like protein DB10, found in Nicotiana sylvestris (Wood tobacco).